The following is a 394-amino-acid chain: Ceramide glucosyltransferase-B (394 aa).

Topologically, residues 1 to 10 (MAVLDLALQG) are lumenal. A helical membrane pass occupies residues 11–32 (LAIFGCILFFVLWFMHFLSIVY). At 33–195 (TRLHLNKKVS…QVYFGTSHPR (163 aa)) the chain is on the cytoplasmic side. Asp-92 is a short sequence motif (D1). Asp-144 is a short sequence motif (D2). The chain crosses the membrane as a helical span at residues 196–215 (SYISANVTGIKCVTGMSCLM). Residues 216–287 (RKEVLDQAGG…KLRINMLPAT (72 aa)) lie on the Lumenal side of the membrane. A short sequence motif (D3) is located at residue Asp-236. Residue Asp-236 is the Proton acceptor of the active site. Residues 272–276 (RMIRW) carry the (Q/R)XXRW motif. Residues 288–304 (IICEPISECFVASLIIG) traverse the membrane as a helical segment. Over 305 to 309 (WAAHH) the chain is Cytoplasmic. A helical membrane pass occupies residues 310–328 (IFRWDIMVFFMCHCLAWFI). The Lumenal portion of the chain corresponds to 329–348 (FDYIQLRGVQGGPLNFSKLD). The helical transmembrane segment at 349–369 (YAVAWFIRESMTIYIFLSALW) threads the bilayer. Residues 370–394 (DPTISWRTGRYRLRCGGTAEEILDV) are Cytoplasmic-facing.

This sequence belongs to the glycosyltransferase 2 family.

The protein localises to the golgi apparatus membrane. It catalyses the reaction an N-acylsphing-4-enine + UDP-alpha-D-glucose = a beta-D-glucosyl-(1&lt;-&gt;1')-N-acylsphing-4-enine + UDP + H(+). The catalysed reaction is UDP-alpha-D-xylose + an N-acylsphing-4-enine = a beta-D-xylosyl-(1&lt;-&gt;1')-N-acylsphing-4-enine + UDP + H(+). It carries out the reaction N-(9Z-octadecenoyl)-sphing-4-enine + UDP-alpha-D-xylose = beta-D-xylosyl-(1&lt;-&gt;1')-N-(9Z-octadecenoyl)-sphing-4-enine + UDP + H(+). The protein operates within lipid metabolism; sphingolipid metabolism. Participates in the initial step of the glucosylceramide-based glycosphingolipid/GSL synthetic pathway at the cytosolic surface of the Golgi. Catalyzes the transfer of glucose from UDP-glucose to ceramide to produce glucosylceramide/GlcCer (such as beta-D-glucosyl-(1&lt;-&gt;1')-N-acylsphing-4-enine). Glucosylceramide is the core component of glycosphingolipids/GSLs, amphipathic molecules consisting of a ceramide lipid moiety embedded in the outer leaflet of the membrane, linked to one of hundreds of different externally oriented oligosaccharide structures. Glycosphingolipids are essential components of membrane microdomains that mediate membrane trafficking and signal transduction. They are implicated in many fundamental cellular processes, including growth, differentiation, migration, morphogenesis, cell-to-cell and cell-to-matrix interactions. Catalyzes the synthesis of xylosylceramide/XylCer (such as beta-D-xylosyl-(1&lt;-&gt;1')-N-acylsphing-4-enine) using UDP-Xyl as xylose donor. The sequence is that of Ceramide glucosyltransferase-B (ugcg-b) from Xenopus laevis (African clawed frog).